A 242-amino-acid polypeptide reads, in one-letter code: UPF0309 protein BSUIS_B0903 (242 aa).

One can recognise an SIS domain in the interval 30 to 214; it reads AADLIAAAAR…ARLVGEGDAP (185 aa).

Belongs to the UPF0309 family.

The chain is UPF0309 protein BSUIS_B0903 from Brucella suis (strain ATCC 23445 / NCTC 10510).